We begin with the raw amino-acid sequence, 94 residues long: Small ribosomal subunit protein bS6 (94 aa).

The protein belongs to the bacterial ribosomal protein bS6 family.

Its function is as follows. Binds together with bS18 to 16S ribosomal RNA. This chain is Small ribosomal subunit protein bS6, found in Alkaliphilus oremlandii (strain OhILAs) (Clostridium oremlandii (strain OhILAs)).